A 299-amino-acid polypeptide reads, in one-letter code: Ribosomal RNA small subunit methyltransferase H (299 aa).

Residues 35-37 (GGH), D54, Y80, D101, and Q108 contribute to the S-adenosyl-L-methionine site.

The protein belongs to the methyltransferase superfamily. RsmH family.

It is found in the cytoplasm. It catalyses the reaction cytidine(1402) in 16S rRNA + S-adenosyl-L-methionine = N(4)-methylcytidine(1402) in 16S rRNA + S-adenosyl-L-homocysteine + H(+). Specifically methylates the N4 position of cytidine in position 1402 (C1402) of 16S rRNA. The protein is Ribosomal RNA small subunit methyltransferase H of Coprothermobacter proteolyticus (strain ATCC 35245 / DSM 5265 / OCM 4 / BT).